A 317-amino-acid polypeptide reads, in one-letter code: DNA-directed RNA polymerase subunit alpha 2 (317 aa).

The alpha N-terminal domain (alpha-NTD) stretch occupies residues 1 to 227 (MALENLLHPT…NQLRNIVDIE (227 aa)). The tract at residues 241-317 (INPILLKHVE…TLIENWPQDL (77 aa)) is alpha C-terminal domain (alpha-CTD).

This sequence belongs to the RNA polymerase alpha chain family. In terms of assembly, homodimer. The RNAP catalytic core consists of 2 alpha, 1 beta, 1 beta' and 1 omega subunit. When a sigma factor is associated with the core the holoenzyme is formed, which can initiate transcription.

It carries out the reaction RNA(n) + a ribonucleoside 5'-triphosphate = RNA(n+1) + diphosphate. Its function is as follows. DNA-dependent RNA polymerase catalyzes the transcription of DNA into RNA using the four ribonucleoside triphosphates as substrates. In Francisella tularensis subsp. holarctica (strain FTNF002-00 / FTA), this protein is DNA-directed RNA polymerase subunit alpha 2.